A 166-amino-acid polypeptide reads, in one-letter code: Lipoprotein signal peptidase (166 aa).

A run of 4 helical transmembrane segments spans residues 9–29 (ASGALAPWLGISLIVILFDQL), 45–65 (ALTSFFSLVLVYNRGAAFGFL), 71–91 (WQRWAFTALGIGATLVICFLL), and 100–120 (FSLSLALILGGALGNVIDRLV). Catalysis depends on residues Asp126 and Asp144. The chain crosses the membrane as a helical span at residues 135-155 (WHFPAFNLADSAITIGAVLLV).

This sequence belongs to the peptidase A8 family.

The protein localises to the cell inner membrane. It catalyses the reaction Release of signal peptides from bacterial membrane prolipoproteins. Hydrolyzes -Xaa-Yaa-Zaa-|-(S,diacylglyceryl)Cys-, in which Xaa is hydrophobic (preferably Leu), and Yaa (Ala or Ser) and Zaa (Gly or Ala) have small, neutral side chains.. It functions in the pathway protein modification; lipoprotein biosynthesis (signal peptide cleavage). This protein specifically catalyzes the removal of signal peptides from prolipoproteins. This is Lipoprotein signal peptidase from Burkholderia ambifaria (strain ATCC BAA-244 / DSM 16087 / CCUG 44356 / LMG 19182 / AMMD) (Burkholderia cepacia (strain AMMD)).